A 686-amino-acid chain; its full sequence is Methionine--tRNA ligase (686 aa).

Residues 13–23 (PYANGQIHIGH) carry the 'HIGH' region motif. Zn(2+) is bound by residues cysteine 144, cysteine 147, cysteine 157, and cysteine 160. A 'KMSKS' region motif is present at residues 335–339 (KMSKS). ATP is bound at residue lysine 338. Residues 580–686 (DFAKVDLRVA…EGAVPGMRIG (107 aa)) enclose the tRNA-binding domain.

This sequence belongs to the class-I aminoacyl-tRNA synthetase family. MetG type 1 subfamily. As to quaternary structure, homodimer. It depends on Zn(2+) as a cofactor.

The protein localises to the cytoplasm. The catalysed reaction is tRNA(Met) + L-methionine + ATP = L-methionyl-tRNA(Met) + AMP + diphosphate. Is required not only for elongation of protein synthesis but also for the initiation of all mRNA translation through initiator tRNA(fMet) aminoacylation. This Cupriavidus necator (strain ATCC 17699 / DSM 428 / KCTC 22496 / NCIMB 10442 / H16 / Stanier 337) (Ralstonia eutropha) protein is Methionine--tRNA ligase.